A 141-amino-acid polypeptide reads, in one-letter code: Large-conductance mechanosensitive channel (141 aa).

3 helical membrane passes run 17–37 (MDLA…ASIV), 40–60 (LIMP…LFIA), and 86–106 (GNFV…FIIV).

This sequence belongs to the MscL family. As to quaternary structure, homopentamer.

The protein localises to the cell inner membrane. Channel that opens in response to stretch forces in the membrane lipid bilayer. May participate in the regulation of osmotic pressure changes within the cell. The chain is Large-conductance mechanosensitive channel from Thiobacillus denitrificans (strain ATCC 25259 / T1).